Here is a 188-residue protein sequence, read N- to C-terminus: Ribosome-recycling factor (188 aa).

It belongs to the RRF family.

The protein resides in the cytoplasm. Functionally, responsible for the release of ribosomes from messenger RNA at the termination of protein biosynthesis. May increase the efficiency of translation by recycling ribosomes from one round of translation to another. This Gluconobacter oxydans (strain 621H) (Gluconobacter suboxydans) protein is Ribosome-recycling factor.